The sequence spans 472 residues: L-fuculokinase (472 aa).

This sequence belongs to the FGGY kinase family. It depends on a divalent metal cation as a cofactor.

The catalysed reaction is L-fuculose + ATP = L-fuculose 1-phosphate + ADP + H(+). Its pathway is carbohydrate degradation; L-fucose degradation; L-lactaldehyde and glycerone phosphate from L-fucose: step 2/3. Functionally, catalyzes the phosphorylation of L-fuculose. The sequence is that of L-fuculokinase from Escherichia coli O157:H7.